The primary structure comprises 557 residues: Glucose-6-phosphate isomerase (557 aa).

Ala-2 is modified (N-acetylalanine). Lys-12 bears the N6-acetyllysine mark. Ser-107 carries the post-translational modification Phosphoserine. The residue at position 142 (Lys-142) is an N6-acetyllysine. Position 159-160 (159-160 (GS)) interacts with D-glucose 6-phosphate. Phosphoserine; by CK2 is present on Ser-185. Residue 210 to 215 (SKTFTT) participates in D-glucose 6-phosphate binding. Phosphothreonine is present on Thr-250. D-glucose 6-phosphate contacts are provided by Gln-354, Glu-358, and His-389. Residue Glu-358 is the Proton donor of the active site. Residue His-389 is part of the active site. At Ser-455 the chain carries Phosphoserine. Lys-519 contacts D-glucose 6-phosphate. Lys-519 is a catalytic residue.

This sequence belongs to the GPI family. Homodimer; in the catalytically active form. Monomer in the secreted form. Post-translationally, phosphorylation at Ser-185 by CK2 has been shown to decrease enzymatic activity and may contribute to secretion by a non-classical secretory pathway. In terms of processing, ISGylated.

The protein localises to the cytoplasm. It localises to the secreted. The enzyme catalyses alpha-D-glucose 6-phosphate = beta-D-fructose 6-phosphate. It participates in carbohydrate degradation; glycolysis; D-glyceraldehyde 3-phosphate and glycerone phosphate from D-glucose: step 2/4. Functionally, in the cytoplasm, catalyzes the conversion of glucose-6-phosphate to fructose-6-phosphate, the second step in glycolysis, and the reverse reaction during gluconeogenesis. Besides it's role as a glycolytic enzyme, also acts as a secreted cytokine: acts as an angiogenic factor (AMF) that stimulates endothelial cell motility. Acts as a neurotrophic factor, neuroleukin, for spinal and sensory neurons. It is secreted by lectin-stimulated T-cells and induces immunoglobulin secretion. This Bos taurus (Bovine) protein is Glucose-6-phosphate isomerase.